The following is a 275-amino-acid chain: Translation initiation factor 2 subunit alpha (275 aa).

The region spanning 12–83 is the S1 motif domain; that stretch reads GEFVVATVKR…RKGHIDLSLR (72 aa).

This sequence belongs to the eIF-2-alpha family. As to quaternary structure, heterotrimer composed of an alpha, a beta and a gamma chain.

Its function is as follows. eIF-2 functions in the early steps of protein synthesis by forming a ternary complex with GTP and initiator tRNA. This chain is Translation initiation factor 2 subunit alpha (eif2a), found in Pyrococcus horikoshii (strain ATCC 700860 / DSM 12428 / JCM 9974 / NBRC 100139 / OT-3).